Reading from the N-terminus, the 101-residue chain is Chaperone modulatory protein CbpM (101 aa).

Belongs to the CbpM family.

In terms of biological role, interacts with CbpA and inhibits both the DnaJ-like co-chaperone activity and the DNA binding activity of CbpA. Together with CbpA, modulates the activity of the DnaK chaperone system. Does not inhibit the co-chaperone activity of DnaJ. The polypeptide is Chaperone modulatory protein CbpM (Escherichia coli O1:K1 / APEC).